We begin with the raw amino-acid sequence, 500 residues long: MKLISVLITFLLATVIYSQTSPATLKFTVQVYDQFPGFNNNFEPGLGNAITGLIKSTLNSTSRVPELVSTEARIVKNINGGIINPSLFPYFFSPQQDSSLPGQNSPLSLDLIFTYDTTRKIYVYDNQNFFPIDNQGFDVDPAKRIYLNEKKTYHNYHFCMKMNTVFTYKGYEVFNFRGDDDVWVFINNKLVIDLGGLHSPIGTSVDTMTLGLTIGNSYNFDLFFCERHTVGSTIKIETNLLFYCPFKDYCGVCQGDGSSCCNPLTTCNDNNQCTIDSCPSANTIIGPGSIPNYCFHTPKINTNPIDICFNYQCNSSTGNFDPIPIPCLDRSSECLSTIGCNSTVGCQYESICNSNVCNIQNQCSSNGTCVPKSSNDCGIELDGQVDKCKIYSCDSNGGVGCIKEDKCKPSSNPCISTQCNATNGQCYETQIPGDICDCGCGIPENKCKVSWCTPEGICQPKFKSEIDDNNSCTLDSCDPCTGIISHMTAPQCLSCNQCSN.

Residues 1–18 (MKLISVLITFLLATVIYS) form the signal peptide. Asn59 is a glycosylation site (N-linked (GlcNAc...) asparagine). In terms of domain architecture, PA14 spans 114-256 (TYDTTRKIYV…KDYCGVCQGD (143 aa)). Residues Asn314, Asn341, Asn366, Asn420, and Asn469 are each glycosylated (N-linked (GlcNAc...) asparagine).

This sequence belongs to the prespore-cell-inducing factor family.

The protein resides in the secreted. The chain is Protein psiE (psiE) from Dictyostelium discoideum (Social amoeba).